Consider the following 419-residue polypeptide: UPF0329 protein ECU07_1890/ECU10_0010 (419 aa).

A compositionally biased stretch (basic and acidic residues) spans 136–165 (RQRKREEETERSVKELVGDEEKAKSKEEKA). The disordered stretch occupies residues 136 to 222 (RQRKREEETE…KGGKKKSKGG (87 aa)). A compositionally biased stretch (basic residues) spans 213 to 222 (KGGKKKSKGG).

The protein belongs to the UPF0329 family.

In Encephalitozoon cuniculi (strain GB-M1) (Microsporidian parasite), this protein is UPF0329 protein ECU07_1890/ECU10_0010.